We begin with the raw amino-acid sequence, 504 residues long: CaM kinase-like vesicle-associated protein (504 aa).

Positions 24-286 (YDLGQVVKTE…AEEAISHEWI (263 aa)) constitute a Protein kinase domain. The tract at residues 378 to 504 (KSDDMASADR…AQESQRVETS (127 aa)) is disordered. At Ser-384 the chain carries Phosphoserine. Residues 390–431 (TPATDGSATPATDGSVTPATDGSITPATDGSVTPATDRSATP) show a composition bias toward polar residues. Phosphothreonine occurs at positions 438 and 462. Residues 445-470 (TVPAAQSSAAPAAKAAATPEPAVAQP) show a composition bias toward low complexity.

Belongs to the protein kinase superfamily. CAMK Ser/Thr protein kinase family. In terms of assembly, interacts with calmodulin, in the presence of calcium. Ca(2+) serves as cofactor. As to expression, expressed in brain and weakly in eye. Not detected in liver, kidney, spleen, thymus, bladder, aorta, lung, intestine, esophagus, stomach, skeletal muscle, heart, diaphragm, uterus, tail skin, submaxillary gland, prostate, ear, epididymis, placenta, pancreas, ovary, testis, adrenal gland, parathyroid gland, thyroid gland, pineal gland, pituitary and sciatic nerve. In adult hippocampus, predominantly expressed in caudate nucleus, cortex, hypothalamus, olfactory bulb, and midbrain and faintly in pons, brainstem and spinal cord.

It localises to the cell membrane. Its subcellular location is the cytoplasmic vesicle membrane. Functionally, has no detectable kinase activity in vitro. The polypeptide is CaM kinase-like vesicle-associated protein (Camkv) (Rattus norvegicus (Rat)).